The primary structure comprises 502 residues: Actin-binding protein WASF3 (502 aa).

Residues 57-93 (NEANNFYIRANSLQDRIDRLAVKVTQLDSTVEEVSLQ) adopt a coiled-coil conformation. At tyrosine 151 the chain carries Phosphotyrosine; by ABL1. A coiled-coil region spans residues 162–206 (KEKMLQDTEDKRKEKRRQKEQKRIDGTTREVKKVRKARNRRQEWN). 2 disordered regions span residues 169–210 (TEDK…MMAY) and 223–443 (SVYH…ARSD). A compositionally biased stretch (basic and acidic residues) spans 182 to 192 (QKRIDGTTREV). Residues 223–237 (SVYHGASSEGSLSPD) are compositionally biased toward polar residues. Phosphotyrosine; by ABL1 is present on tyrosine 248. Residues 302 to 312 (QQPPPPPPPQA) show a composition bias toward pro residues. Residue tyrosine 337 is modified to Phosphotyrosine; by ABL1. Composition is skewed to pro residues over residues 341–352 (SGPPPPPPPPVI) and 394–410 (APPPPGPPPPPPGPPGP). Positions 411 to 423 (GSSLSSSPMHGPP) are enriched in low complexity. Residues 440 to 457 (ARSDLLAAIRMGIQLKKV) form the WH2 domain. Tyrosine 486 is subject to Phosphotyrosine; by ABL1.

It belongs to the SCAR/WAVE family. As to quaternary structure, binds actin and the Arp2/3 complex. Post-translationally, phosphorylation by ABL1 promotes lamellipodia formation and cell migration. In terms of tissue distribution, expressed in ovary and brain.

Its subcellular location is the cytoplasm. It is found in the cytoskeleton. In terms of biological role, downstream effector molecules involved in the transmission of signals from tyrosine kinase receptors and small GTPases to the actin cytoskeleton. Plays a role in the regulation of cell morphology and cytoskeletal organization. Required in the control of cell shape. This Homo sapiens (Human) protein is Actin-binding protein WASF3 (WASF3).